Consider the following 429-residue polypeptide: Adenylosuccinate synthetase (429 aa).

GTP-binding positions include 12–18 (GDEGKGK) and 40–42 (GHT). Asp-13 functions as the Proton acceptor in the catalytic mechanism. Mg(2+)-binding residues include Asp-13 and Gly-40. Residues 13–16 (DEGK), 38–41 (NAGH), Thr-128, Arg-142, Gln-223, Thr-238, and Arg-302 contribute to the IMP site. The active-site Proton donor is the His-41. 298–304 (VNTGRPR) is a substrate binding site. GTP contacts are provided by residues Arg-304, 330-332 (KLD), and 412-414 (GVG).

This sequence belongs to the adenylosuccinate synthetase family. As to quaternary structure, homodimer. Requires Mg(2+) as cofactor.

It localises to the cytoplasm. It carries out the reaction IMP + L-aspartate + GTP = N(6)-(1,2-dicarboxyethyl)-AMP + GDP + phosphate + 2 H(+). It functions in the pathway purine metabolism; AMP biosynthesis via de novo pathway; AMP from IMP: step 1/2. Functionally, plays an important role in the de novo pathway of purine nucleotide biosynthesis. Catalyzes the first committed step in the biosynthesis of AMP from IMP. This is Adenylosuccinate synthetase from Kocuria rhizophila (strain ATCC 9341 / DSM 348 / NBRC 103217 / DC2201).